We begin with the raw amino-acid sequence, 522 residues long: MVRSGKNGDLHLKQIAYYKRTGEYHSTTLPSERSGIRRAAKKFVFKEKKLFYVGKDRKQNRLVIVSEEEKKKVLRECHENDSGAHHGISRTLTLVESNYYWTSVTNDVKQWVYACQHCQVAKNTVIVAPKQHLLKVENPWSLVTVDLMGPFHTSNRSHVYAIIMTDLFTKWIVILPLCDVSASEVSKAIINIFFLYGPPQKIIMDQRDEFIQQINIELYRLFGIKQIVISHTSGTVNPTESTPNTIKAFLSKHCADHPNNWDDHLSAVSFAFNVTHLEPTKNTPYFQMFSRNPYMPETSDSLHEVDGDNTSMFAKILDAIKEADKIMENKTTSLGQMENNNLDELNKSKIIVKKKPKQLNPFHLKVGHEVLRQRKNWWKDGRFQSEWVGPCVIDYITESGCAVLRDNTGVRLKRPIKMSHLKPYIRESSEQESLYLLQGSVVADHDYIGLPEIPIGAYQANILVEDATIGIVDNELLTSSKDRELLEYRNTKISPLIDDHSSLEKQTFSLLDSSNQVLEYLS.

Residues 135–292 (KVENPWSLVT…TPYFQMFSRN (158 aa)) form the Integrase catalytic domain. The residue at position 502 (serine 502) is a Phosphoserine.

In terms of tissue distribution, widely expressed. Also found in tumors originating from parathyroid gland, colon, stomach, bladder, uterus and prostate.

The polypeptide is Gypsy retrotransposon integrase-like protein 1 (GIN1) (Homo sapiens (Human)).